The sequence spans 1264 residues: ATP-dependent helicase/nuclease subunit A (1264 aa).

One can recognise a UvrD-like helicase ATP-binding domain in the interval 12–482 (EQFTDSQWQA…IILAENFRSR (471 aa)). 33 to 40 (ASAGSGKT) contributes to the ATP binding site. In terms of domain architecture, UvrD-like helicase C-terminal spans 520–808 (SEAADYSTEL…RVMTIHASKG (289 aa)).

Belongs to the helicase family. AddA subfamily. In terms of assembly, heterodimer of AddA and AddB/RexB. Mg(2+) is required as a cofactor.

It carries out the reaction Couples ATP hydrolysis with the unwinding of duplex DNA by translocating in the 3'-5' direction.. It catalyses the reaction ATP + H2O = ADP + phosphate + H(+). The heterodimer acts as both an ATP-dependent DNA helicase and an ATP-dependent, dual-direction single-stranded exonuclease. Recognizes the chi site generating a DNA molecule suitable for the initiation of homologous recombination. The AddA nuclease domain is required for chi fragment generation; this subunit has the helicase and 3' -&gt; 5' nuclease activities. This chain is ATP-dependent helicase/nuclease subunit A, found in Enterococcus faecalis (strain ATCC 700802 / V583).